The following is a 77-amino-acid chain: uncharacterized protein (77 aa).

This is an uncharacterized protein from Orgyia pseudotsugata multicapsid polyhedrosis virus (OpMNPV).